Consider the following 44-residue polypeptide: uncharacterized protein (44 aa).

This is an uncharacterized protein from Treponema pallidum (strain Nichols).